The following is a 386-amino-acid chain: Succinate--CoA ligase [ADP-forming] subunit beta (386 aa).

Residues 9–244 form the ATP-grasp domain; the sequence is KEILHKFNVP…YDEEVKEEIE (236 aa). Residues lysine 46, 53-55, glutamate 99, serine 102, and glutamate 107 each bind ATP; that span reads GRG. Mg(2+) contacts are provided by asparagine 199 and aspartate 213. Residues asparagine 264 and 321 to 323 each bind substrate; that span reads GIM.

It belongs to the succinate/malate CoA ligase beta subunit family. Heterotetramer of two alpha and two beta subunits. Requires Mg(2+) as cofactor.

The enzyme catalyses succinate + ATP + CoA = succinyl-CoA + ADP + phosphate. It carries out the reaction GTP + succinate + CoA = succinyl-CoA + GDP + phosphate. It functions in the pathway carbohydrate metabolism; tricarboxylic acid cycle; succinate from succinyl-CoA (ligase route): step 1/1. Functionally, succinyl-CoA synthetase functions in the citric acid cycle (TCA), coupling the hydrolysis of succinyl-CoA to the synthesis of either ATP or GTP and thus represents the only step of substrate-level phosphorylation in the TCA. The beta subunit provides nucleotide specificity of the enzyme and binds the substrate succinate, while the binding sites for coenzyme A and phosphate are found in the alpha subunit. The sequence is that of Succinate--CoA ligase [ADP-forming] subunit beta from Wolbachia pipientis subsp. Culex pipiens (strain wPip).